The sequence spans 435 residues: Nematode resistance protein-like HSPRO2 (435 aa).

Interacts with SNF4.

The protein localises to the cytoplasm. Positive regulator of basal resistance. The chain is Nematode resistance protein-like HSPRO2 (HSPRO2) from Arabidopsis thaliana (Mouse-ear cress).